Here is a 221-residue protein sequence, read N- to C-terminus: Nucleolar protein 3 (221 aa).

G2 carries the N-myristoyl glycine lipid modification. A CARD domain is found at M4–H95. The essential for interaction with BAX stretch occupies residues V20–E70. The tract at residues P107–T221 is disordered. Positions E132–E143 are enriched in acidic residues. T149 bears the Phosphothreonine; by CK2 mark. Composition is skewed to acidic residues over residues P165–P201 and F209–T221.

As to quaternary structure, oligomerizes (via CARD doamin). Interacts (via CARD domain) with CASP2; inhibits CASP2 activity in a phosphorylation-dependent manner. Interacts with CASP8; decreases CASP8 activity in a mitochondria localization- and phosphorylation-dependent manner and this interaction is dissociated by calcium. Interacts with TFPT; translocates NOL3 into the nucleus and negatively regulated TFPT-induced cell death. Interacts directly (via CARD domain) with FAS and FADD (via DED domain); inhibits death-inducing signaling complex (DISC) assembly by inhibiting the increase in FAS-FADD binding induced by FAS activation. Interacts (via CARD domain) with BAX (via a C-terminal 33 residues); inhibits BAX activation and translocation and consequently cytochrome c release from mitochondria. Interacts with PPM1G; may dephosphorylate NOL3. Interacts (via CARD domain) with BBC3 (via BH3 domain); preventing the association of BBC3 with BCL2 and resulting in activation of CASP8. Interacts (via CARD domain) with BAD(via BH3 domain); preventing the association of BAD with BCL2. Interacts directly (via CARD domain) with TNFRSF1A; inhibits TNF-signaling pathway. Post-translationally, phosphorylation at Thr-149 is required for its antiapoptotic effect by blocking death-inducing signaling complex (DISC) activity through the control of interaction with CASP8. Phosphorylation at Thr-149 results in translocation to mitochondria and this translocation enables the binding to CASP8. Dephosphorylated at Thr-149 by calcineurin; doesn't inhibit the association between FADD and CASP8 and the consequent apoptosis. In terms of processing, polyubiquitinated by MDM2; promoting proteasomal-dependent degradation in response to apoptotic stimuli. In terms of tissue distribution, highly expressed in skeletal muscle, heart and medulla.

The protein resides in the cytoplasm. It localises to the mitochondrion. Its subcellular location is the sarcoplasmic reticulum. The protein localises to the membrane. Apoptosis repressor that blocks multiple modes of cell death. Inhibits extrinsic apoptotic pathways through two different ways. Firstly by interacting with FAS and FADD upon FAS activation blocking death-inducing signaling complex (DISC) assembly. Secondly by interacting with CASP8 in a mitochondria localization- and phosphorylation-dependent manner, limiting the amount of soluble CASP8 available for DISC-mediated activation. Inhibits intrinsic apoptotic pathway in response to a wide range of stresses, through its interaction with BAX resulting in BAX inactivation, preventing mitochondrial dysfunction and release of pro-apoptotic factors. Inhibits calcium-mediated cell death by functioning as a cytosolic calcium buffer, dissociating its interaction with CASP8 and maintaining calcium homeostasis. Negatively regulates oxidative stress-induced apoptosis by phosphorylation-dependent suppression of the mitochondria-mediated intrinsic pathway, by blocking CASP2 activation and BAX translocation. Negatively regulates hypoxia-induced apoptosis in part by inhibiting the release of cytochrome c from mitochondria in a caspase-independent manner. Also inhibits TNF-induced necrosis by preventing TNF-signaling pathway through TNFRSF1A interaction abrogating the recruitment of RIPK1 to complex I. Finally through its role as apoptosis repressor, promotes vascular remodeling through inhibition of apoptosis and stimulation of proliferation, in response to hypoxia. Inhibits too myoblast differentiation through caspase inhibition. The protein is Nucleolar protein 3 (Nol3) of Rattus norvegicus (Rat).